The chain runs to 497 residues: Meiosis-specific serine/threonine-protein kinase MEK1 (497 aa).

The region spanning 47 to 102 (VKVGRNDKECQLVLTNPSISSVHCVFWCVFFDEDSIPMFYVKDCSLNGTYLNGLLL) is the FHA domain. Residues 162 to 444 (EITNRIVGNG…SKQGLKHIWI (283 aa)) form the Protein kinase domain. Residues 168 to 176 (VGNGTFGHV) and K199 contribute to the ATP site. Residue D290 is the Proton acceptor of the active site.

The protein belongs to the protein kinase superfamily. CAMK Ser/Thr protein kinase family. CHEK2 subfamily.

It carries out the reaction L-seryl-[protein] + ATP = O-phospho-L-seryl-[protein] + ADP + H(+). It catalyses the reaction L-threonyl-[protein] + ATP = O-phospho-L-threonyl-[protein] + ADP + H(+). Its function is as follows. Probable protein kinase required for meiotic recombination. This is Meiosis-specific serine/threonine-protein kinase MEK1 (MEK1) from Saccharomyces cerevisiae (strain ATCC 204508 / S288c) (Baker's yeast).